Reading from the N-terminus, the 243-residue chain is Urease accessory protein UreF 2 (243 aa).

Belongs to the UreF family. UreD, UreF and UreG form a complex that acts as a GTP-hydrolysis-dependent molecular chaperone, activating the urease apoprotein by helping to assemble the nickel containing metallocenter of UreC. The UreE protein probably delivers the nickel.

Its subcellular location is the cytoplasm. Functionally, required for maturation of urease via the functional incorporation of the urease nickel metallocenter. In terms of biological role, disrupting the ure2 operon has no effect on urease activity or pathogen survival in BALB/c mice when administered orally. The polypeptide is Urease accessory protein UreF 2 (Brucella abortus (strain 2308)).